The sequence spans 192 residues: Pyridoxal 5'-phosphate synthase subunit PdxT (192 aa).

An L-glutamine-binding site is contributed by 50 to 52 (GES). Cysteine 82 acts as the Nucleophile in catalysis. L-glutamine is bound by residues arginine 109 and 136–137 (IR). Catalysis depends on charge relay system residues histidine 172 and glutamate 174.

The protein belongs to the glutaminase PdxT/SNO family. In terms of assembly, in the presence of PdxS, forms a dodecamer of heterodimers. Only shows activity in the heterodimer.

It carries out the reaction aldehydo-D-ribose 5-phosphate + D-glyceraldehyde 3-phosphate + L-glutamine = pyridoxal 5'-phosphate + L-glutamate + phosphate + 3 H2O + H(+). It catalyses the reaction L-glutamine + H2O = L-glutamate + NH4(+). Its pathway is cofactor biosynthesis; pyridoxal 5'-phosphate biosynthesis. Catalyzes the hydrolysis of glutamine to glutamate and ammonia as part of the biosynthesis of pyridoxal 5'-phosphate. The resulting ammonia molecule is channeled to the active site of PdxS. The protein is Pyridoxal 5'-phosphate synthase subunit PdxT of Haemophilus influenzae (strain PittEE).